The sequence spans 146 residues: Hemoglobin subunit beta (146 aa).

Val1 carries the N-acetylvaline modification. A Globin domain is found at His2–His146. Thr12 carries the phosphothreonine modification. Lys59 carries the N6-acetyllysine modification. His63 provides a ligand contact to heme b. Lys82 carries the post-translational modification N6-acetyllysine. A heme b-binding site is contributed by His92. Cys93 is subject to S-nitrosocysteine. Lys144 is subject to N6-acetyllysine.

It belongs to the globin family. As to quaternary structure, heterotetramer of two alpha chains and two beta chains. As to expression, red blood cells.

In terms of biological role, involved in oxygen transport from the lung to the various peripheral tissues. The sequence is that of Hemoglobin subunit beta (HBB) from Balaenoptera acutorostrata (Common minke whale).